We begin with the raw amino-acid sequence, 357 residues long: 3-isopropylmalate dehydrogenase, chloroplastic (357 aa).

The transit peptide at 1 to 29 (MALQIAKRLLRCRADSVASSVRFFDRTFT) directs the protein to the chloroplast. 4 residues coordinate substrate: Arg120, Arg130, Arg151, and Asp238. Mg(2+) contacts are provided by Asp238, Asp262, and Asp266. 296–308 (GSAPDIAGKNLAN) is a binding site for NAD(+).

Belongs to the isocitrate and isopropylmalate dehydrogenases family. In terms of assembly, homodimer. Mg(2+) is required as a cofactor. It depends on Mn(2+) as a cofactor.

Its subcellular location is the plastid. It localises to the chloroplast. It carries out the reaction (2R,3S)-3-isopropylmalate + NAD(+) = 4-methyl-2-oxopentanoate + CO2 + NADH. It functions in the pathway amino-acid biosynthesis; L-leucine biosynthesis; L-leucine from 3-methyl-2-oxobutanoate: step 3/4. Functionally, catalyzes the oxidation of 3-carboxy-2-hydroxy-4-methylpentanoate (3-isopropylmalate) to 3-carboxy-4-methyl-2-oxopentanoate. The product decarboxylates to 4-methyl-2 oxopentanoate. In Solanum tuberosum (Potato), this protein is 3-isopropylmalate dehydrogenase, chloroplastic.